The primary structure comprises 245 residues: Octopine transport system permease protein OccM (245 aa).

The next 5 membrane-spanning stretches (helical) occupy residues 12-32 (FIAL…SIAV), 57-77 (FYIF…IYYG), 96-116 (AYWC…AEIM), 163-183 (VLMV…ITGI), and 199-219 (ACAG…FALI). In terms of domain architecture, ABC transmembrane type-1 spans 19–216 (IPLALKLAVF…TMNFIAARLF (198 aa)).

It belongs to the binding-protein-dependent transport system permease family. HisMQ subfamily.

The protein localises to the cell inner membrane. Functionally, component of the octopine active transport system probably consisting of four subunits: Q, M, P and T. The polypeptide is Octopine transport system permease protein OccM (occM) (Rhizobium meliloti (Ensifer meliloti)).